Here is a 95-residue protein sequence, read N- to C-terminus: Small ribosomal subunit protein uS19 (95 aa).

The protein belongs to the universal ribosomal protein uS19 family.

Functionally, protein S19 forms a complex with S13 that binds strongly to the 16S ribosomal RNA. This Thermosipho africanus (strain TCF52B) protein is Small ribosomal subunit protein uS19.